A 116-amino-acid chain; its full sequence is Iron-sulfur cluster insertion protein ErpA (116 aa).

Iron-sulfur cluster is bound by residues Cys-44, Cys-108, and Cys-110.

This sequence belongs to the HesB/IscA family. As to quaternary structure, homodimer. Requires iron-sulfur cluster as cofactor.

Functionally, required for insertion of 4Fe-4S clusters for at least IspG. The chain is Iron-sulfur cluster insertion protein ErpA from Pseudomonas entomophila (strain L48).